Reading from the N-terminus, the 47-residue chain is uncharacterized protein (47 aa).

This is an uncharacterized protein from Saccharomyces cerevisiae (strain ATCC 204508 / S288c) (Baker's yeast).